The chain runs to 155 residues: Large ribosomal subunit protein uL11 (155 aa).

It belongs to the universal ribosomal protein uL11 family. In terms of assembly, part of the ribosomal stalk of the 50S ribosomal subunit. Interacts with L10 and the large rRNA to form the base of the stalk. L10 forms an elongated spine to which L12 dimers bind in a sequential fashion forming a multimeric L10(L12)X complex.

Functionally, forms part of the ribosomal stalk which helps the ribosome interact with GTP-bound translation factors. The chain is Large ribosomal subunit protein uL11 from Picrophilus torridus (strain ATCC 700027 / DSM 9790 / JCM 10055 / NBRC 100828 / KAW 2/3).